Reading from the N-terminus, the 177-residue chain is Ribulose bisphosphate carboxylase small subunit, chloroplastic 4 (177 aa).

The N-terminal 56 residues, 1–56 (MASSMMASTAAAVARAGPAQTNMVPFNACRSSVPFPATRKANNDLSTLPSNGGRVS), are a transit peptide targeting the chloroplast.

This sequence belongs to the RuBisCO small chain family. Heterohexadecamer of 8 large and 8 small subunits.

It is found in the plastid. It localises to the chloroplast. In terms of biological role, ruBisCO catalyzes two reactions: the carboxylation of D-ribulose 1,5-bisphosphate, the primary event in carbon dioxide fixation, as well as the oxidative fragmentation of the pentose substrate. Both reactions occur simultaneously and in competition at the same active site. Although the small subunit is not catalytic it is essential for maximal activity. The protein is Ribulose bisphosphate carboxylase small subunit, chloroplastic 4 of Lemna gibba (Swollen duckweed).